The following is a 519-amino-acid chain: Ubiquitin carboxyl-terminal hydrolase 30 (519 aa).

The Mitochondrial intermembrane segment spans residues 1–52 (MSWAPVSTWSRRTPLAACCSAPELPPAGAWKACAAGSLRIGPQGRCKMMKNW). Residues 53-73 (GMIGGIAAALAAGIYVLWGPI) traverse the membrane as a helical segment. The Cytoplasmic portion of the chain corresponds to 74-519 (SDRKKYRKGL…HPEDQRAAEK (446 aa)). The USP domain maps to 85–504 (PGLLNLGNTC…SAYLLFYERI (420 aa)). The active-site Nucleophile is the Cys-94. The tract at residues 379–405 (SKQPANHLSAAEQETTDGKEGGAQNPT) is disordered. Residue His-455 is the Proton acceptor of the active site.

It belongs to the peptidase C19 family.

The protein localises to the mitochondrion outer membrane. The catalysed reaction is Thiol-dependent hydrolysis of ester, thioester, amide, peptide and isopeptide bonds formed by the C-terminal Gly of ubiquitin (a 76-residue protein attached to proteins as an intracellular targeting signal).. In terms of biological role, deubiquitinating enzyme that acts as a key inhibitor of mitophagy by counteracting the action of parkin (PRKN). The chain is Ubiquitin carboxyl-terminal hydrolase 30 (usp30) from Xenopus tropicalis (Western clawed frog).